The sequence spans 74 residues: uncharacterized protein (74 aa).

This is an uncharacterized protein from Caenorhabditis elegans.